Consider the following 364-residue polypeptide: MAQQTPLYEQHTLCGARMVDFHGWMMPLHYGSQLDEHHAVRTDAGMFDVSHMTIVDLHGSRTREFLRYLLANDVAKLTKTGKALYSGMLNASGGVIDDLIVYYFTEDFFRLVVNSATREKDLSWITQHAEPYAIDITVRDDLSLIAVQGPNAQEKAATLFTEQQRHAVEGMKPFFGVQAGDLFIATTGYTGEAGYEIAMPNEKAADFWRALVEAGVKPCGLGARDTLRLEAGMNLYGQEMDEGISPLAANMGWTIAWEPADRDFIGREALEMQREKGHEQLVGLVMTEKGVLRNELPVRFTDAQGNQQEGIITSGTFSPTLGYSIALARVPAGIGETAIVQIRNREMPVKVTKPVFVRNGKAVA.

This sequence belongs to the GcvT family. In terms of assembly, the glycine cleavage system is composed of four proteins: P, T, L and H.

The catalysed reaction is N(6)-[(R)-S(8)-aminomethyldihydrolipoyl]-L-lysyl-[protein] + (6S)-5,6,7,8-tetrahydrofolate = N(6)-[(R)-dihydrolipoyl]-L-lysyl-[protein] + (6R)-5,10-methylene-5,6,7,8-tetrahydrofolate + NH4(+). The glycine cleavage system catalyzes the degradation of glycine. The polypeptide is Aminomethyltransferase (Salmonella paratyphi B (strain ATCC BAA-1250 / SPB7)).